The primary structure comprises 323 residues: GILT-like protein C02D5.2 (323 aa).

Residues 13-32 form a helical membrane-spanning segment; that stretch reads LICRPILTFSSLHILTAFLI. An N-linked (GlcNAc...) asparagine glycan is attached at Asn-35. Transmembrane regions (helical) follow at residues 37–59 and 87–104; these read SYIN…HRFL and YIYG…YRSL. An N-linked (GlcNAc...) asparagine glycan is attached at Asn-289.

Belongs to the GILT family.

Its subcellular location is the membrane. In Caenorhabditis elegans, this protein is GILT-like protein C02D5.2.